Consider the following 336-residue polypeptide: Calcium uniporter protein 3, mitochondrial (336 aa).

Residues 1 to 69 constitute a mitochondrion transit peptide; it reads MAMRKLLSKK…RFMHNSAMIR (69 aa). 2 helical membrane passes run 231–251 and 257–277; these read LWAGLGYLILQTAGFMRLTFW and VMEPICFYVTSVYFMAGYAFF. A Selectivity filter motif is present at residues 255–263; the sequence is WDVMEPICF. Glu259 contacts Ca(2+).

This sequence belongs to the MCU (TC 1.A.77) family.

The protein localises to the mitochondrion inner membrane. The catalysed reaction is Ca(2+)(in) = Ca(2+)(out). In terms of biological role, mitochondrial inner membrane calcium uniporter that mediates calcium uptake into mitochondria. Constitutes a pore-forming and calcium-conducting subunit. Mitochondrial calcium homeostasis plays key roles in cellular physiology and regulates cell bioenergetics, cytoplasmic calcium signals and activation of cell death pathways. This Arabidopsis thaliana (Mouse-ear cress) protein is Calcium uniporter protein 3, mitochondrial.